A 200-amino-acid polypeptide reads, in one-letter code: uncharacterized protein (200 aa).

The Response regulatory domain occupies 3-119 (RLFIAEDQRM…DLADAIRKCV (117 aa)). Residue aspartate 54 is modified to 4-aspartylphosphate. An HTH luxR-type domain is found at 133 to 198 (MMRDENPLTV…EAASIAEEKG (66 aa)). Residues 157–176 (TKDITLELYLSQGTVRNYIS) constitute a DNA-binding region (H-T-H motif).

Phosphorylated by YvfT.

The protein resides in the cytoplasm. Its function is as follows. Member of the two-component regulatory system YvfT/YvfU. This is an uncharacterized protein from Bacillus subtilis (strain 168).